Here is a 90-residue protein sequence, read N- to C-terminus: Small ribosomal subunit protein bS16 (90 aa).

This sequence belongs to the bacterial ribosomal protein bS16 family.

The polypeptide is Small ribosomal subunit protein bS16 (Anoxybacillus flavithermus (strain DSM 21510 / WK1)).